The sequence spans 138 residues: Putative pre-16S rRNA nuclease (138 aa).

It belongs to the YqgF nuclease family.

Its subcellular location is the cytoplasm. Its function is as follows. Could be a nuclease involved in processing of the 5'-end of pre-16S rRNA. This Listeria innocua serovar 6a (strain ATCC BAA-680 / CLIP 11262) protein is Putative pre-16S rRNA nuclease.